Consider the following 350-residue polypeptide: Phenylalanine--tRNA ligase alpha subunit (350 aa).

Position 262 (E262) interacts with Mg(2+).

This sequence belongs to the class-II aminoacyl-tRNA synthetase family. Phe-tRNA synthetase alpha subunit type 1 subfamily. Tetramer of two alpha and two beta subunits. Requires Mg(2+) as cofactor.

Its subcellular location is the cytoplasm. The enzyme catalyses tRNA(Phe) + L-phenylalanine + ATP = L-phenylalanyl-tRNA(Phe) + AMP + diphosphate + H(+). In Thermus thermophilus (strain ATCC 27634 / DSM 579 / HB8), this protein is Phenylalanine--tRNA ligase alpha subunit (pheS).